We begin with the raw amino-acid sequence, 117 residues long: Probable prefoldin subunit 1 (117 aa).

It belongs to the prefoldin subunit beta family. In terms of assembly, heterohexamer of two PFD-alpha type and four PFD-beta type subunits. In terms of tissue distribution, expressed in the distal cell tip of developing embryos.

Its subcellular location is the cytoplasm. Binds specifically to cytosolic chaperonin (c-CPN) and transfers target proteins to it. Binds to nascent polypeptide chain and promotes folding in an environment in which there are many competing pathways for nonnative proteins. Has a role in gonadogenesis. In Caenorhabditis elegans, this protein is Probable prefoldin subunit 1 (pfd-1).